We begin with the raw amino-acid sequence, 274 residues long: uncharacterized protein (274 aa).

Residues 1-15 (MEESKTKRKEDRIDL) show a composition bias toward basic and acidic residues. The tract at residues 1–40 (MEESKTKRKEDRIDLKNTPPQKKSKRDSTNDETARTSLRS) is disordered. The G-patch domain occupies 41 to 87 (IMPRGYKMMENMGYKEGETLGSNESALKEPIKVEINTKRRGIRAEKP).

It localises to the cytoplasm. It is found in the nucleus. This is an uncharacterized protein from Saccharomyces cerevisiae (strain ATCC 204508 / S288c) (Baker's yeast).